The chain runs to 490 residues: Glutamyl-tRNA(Gln) amidotransferase subunit A (490 aa).

Active-site charge relay system residues include Lys-78 and Ser-158. Catalysis depends on Ser-182, which acts as the Acyl-ester intermediate.

It belongs to the amidase family. GatA subfamily. In terms of assembly, heterotrimer of A, B and C subunits.

It carries out the reaction L-glutamyl-tRNA(Gln) + L-glutamine + ATP + H2O = L-glutaminyl-tRNA(Gln) + L-glutamate + ADP + phosphate + H(+). Its function is as follows. Allows the formation of correctly charged Gln-tRNA(Gln) through the transamidation of misacylated Glu-tRNA(Gln) in organisms which lack glutaminyl-tRNA synthetase. The reaction takes place in the presence of glutamine and ATP through an activated gamma-phospho-Glu-tRNA(Gln). The protein is Glutamyl-tRNA(Gln) amidotransferase subunit A of Caulobacter sp. (strain K31).